The sequence spans 79 residues: CATR tumorigenic conversion 1 protein (79 aa).

The sequence is that of CATR tumorigenic conversion 1 protein (CATR1) from Homo sapiens (Human).